Here is a 714-residue protein sequence, read N- to C-terminus: Interferon-induced GTP-binding protein Mx2 (714 aa).

The interval 1 to 89 is disordered; it reads MSMSYRALKF…QRSKGSENNL (89 aa). Polar residues-rich tracts occupy residues 61-70 and 79-88; these read NNFNQLNLDP and QQRSKGSENN. In terms of domain architecture, Dynamin-type G spans 115-386; sequence DLALPAIAVI…LIWHINKSLP (272 aa). The G1 motif stretch occupies residues 125-132; it reads GDQSSGKS. 125-132 serves as a coordination point for GTP; that stretch reads GDQSSGKS. The tract at residues 150–152 is G2 motif; it reads ITR. A G3 motif region spans residues 224-227; it reads DLPG. GTP contacts are provided by residues 224 to 228 and 293 to 296; these read DLPGI and TKPD. The G4 motif stretch occupies residues 293–296; the sequence is TKPD. A G5 motif region spans residues 325 to 328; that stretch reads KCRG. A GED domain is found at 622–713; that stretch reads IVEIGVHLNA…ALYEFPHFKS (92 aa).

Belongs to the TRAFAC class dynamin-like GTPase superfamily. Dynamin/Fzo/YdjA family.

The protein resides in the cytoplasm. It localises to the nucleus. In terms of biological role, interferon-induced dynamin-like GTPase with antiviral activity. The polypeptide is Interferon-induced GTP-binding protein Mx2 (MX2) (Ovis aries (Sheep)).